The primary structure comprises 720 residues: Polyribonucleotide nucleotidyltransferase (720 aa).

Asp-484 and Asp-490 together coordinate Mg(2+). Residues 551 to 610 enclose the KH domain; the sequence is PRMYKISIDPSKIGSVIGSGGKTIRSIIEQTNTTVDIENDGTVVIGATDEASAQKAIKII. The S1 motif domain maps to 620-688; sequence GSVYTGKVTR…SQGRINLSRR (69 aa). Residues 697-720 form a disordered region; the sequence is PISRNRDSQPRRSGPFRPQDRSNS.

This sequence belongs to the polyribonucleotide nucleotidyltransferase family. The cofactor is Mg(2+).

The protein resides in the cytoplasm. It catalyses the reaction RNA(n+1) + phosphate = RNA(n) + a ribonucleoside 5'-diphosphate. In terms of biological role, involved in mRNA degradation. Catalyzes the phosphorolysis of single-stranded polyribonucleotides processively in the 3'- to 5'-direction. The sequence is that of Polyribonucleotide nucleotidyltransferase from Dehalococcoides mccartyi (strain ATCC BAA-2266 / KCTC 15142 / 195) (Dehalococcoides ethenogenes (strain 195)).